A 210-amino-acid polypeptide reads, in one-letter code: 23.5 kDa heat shock protein, mitochondrial (210 aa).

A mitochondrion-targeting transit peptide spans 1 to 20 (MASSSALALRRLLSSSTVAV). Residues 102–210 (MGASGVRRGW…RNNIRHINVD (109 aa)) form the sHSP domain.

The protein belongs to the small heat shock protein (HSP20) family. In terms of assembly, may form oligomeric structures.

Its subcellular location is the mitochondrion. In Arabidopsis thaliana (Mouse-ear cress), this protein is 23.5 kDa heat shock protein, mitochondrial (HSP23.5).